Here is a 433-residue protein sequence, read N- to C-terminus: D-amino acid dehydrogenase (433 aa).

3 to 17 (VLVLGSGVIGTTSAY) is a binding site for FAD.

It belongs to the DadA oxidoreductase family. FAD serves as cofactor.

It catalyses the reaction a D-alpha-amino acid + A + H2O = a 2-oxocarboxylate + AH2 + NH4(+). It functions in the pathway amino-acid degradation; D-alanine degradation; NH(3) and pyruvate from D-alanine: step 1/1. In terms of biological role, oxidative deamination of D-amino acids. In Pseudomonas syringae pv. syringae (strain B728a), this protein is D-amino acid dehydrogenase.